The sequence spans 94 residues: Selenoprotein K (94 aa).

Residues 20–42 traverse the membrane as a helical segment; it reads LSFITDFFWGIAEFVVLFFRTLL. Residues 48-94 form a disordered region; it reads KRRGYGGSSDSRYDDGRGPPGNPPRRMGRINHLRGPNPPPMAGGUGR. Position 92 (Sec92) is a non-standard amino acid, selenocysteine.

It belongs to the selenoprotein K family. As to quaternary structure, interacts with DERL1, DERL2, DERL3 and SELENOS. The SELENOK-SELENOS complex interacts with VCP. Interacts with ZDHHC6. Post-translationally, cleaved by CAPN2/m-calpain in resting macrophages but not in activated macrophages. Macrophage activation up-regulates expression of the calpain inhibitor CAST/calpastatin, resulting in inhibition of CAPN2 activity. In terms of processing, truncated SELENOK proteins produced by failed UGA/Sec decoding are ubiquitinated by the CRL2(KLHDC2) complex, which recognizes the diglycine (Gly-Gly) at the C-terminus of truncated SELENOK proteins.

The protein localises to the endoplasmic reticulum membrane. It is found in the cell membrane. Functionally, required for Ca(2+) flux in immune cells and plays a role in T-cell proliferation and in T-cell and neutrophil migration. Involved in endoplasmic reticulum-associated degradation (ERAD) of soluble glycosylated proteins. Required for palmitoylation and cell surface expression of CD36 and involved in macrophage uptake of low-density lipoprotein and in foam cell formation. Together with ZDHHC6, required for palmitoylation of ITPR1 in immune cells, leading to regulate ITPR1 stability and function. Plays a role in protection of cells from ER stress-induced apoptosis. Protects cells from oxidative stress when overexpressed in cardiomyocytes. The protein is Selenoprotein K of Sus scrofa (Pig).